A 306-amino-acid chain; its full sequence is tRNA dimethylallyltransferase (306 aa).

ATP is bound at residue 11 to 18 (GPTAVGKS). Substrate is bound at residue 13–18 (TAVGKS). Residues 35 to 38 (DSIQ) form an interaction with substrate tRNA region.

This sequence belongs to the IPP transferase family. In terms of assembly, monomer. It depends on Mg(2+) as a cofactor.

The enzyme catalyses adenosine(37) in tRNA + dimethylallyl diphosphate = N(6)-dimethylallyladenosine(37) in tRNA + diphosphate. Catalyzes the transfer of a dimethylallyl group onto the adenine at position 37 in tRNAs that read codons beginning with uridine, leading to the formation of N6-(dimethylallyl)adenosine (i(6)A). The protein is tRNA dimethylallyltransferase of Borreliella burgdorferi (strain ZS7) (Borrelia burgdorferi).